We begin with the raw amino-acid sequence, 441 residues long: Ribulose bisphosphate carboxylase large chain (441 aa).

Substrate-binding residues include N89 and T139. K141 functions as the Proton acceptor in the catalytic mechanism. Substrate is bound at residue K143. Residues K167, D169, and E170 each contribute to the Mg(2+) site. N6-carboxylysine is present on K167. H260 functions as the Proton acceptor in the catalytic mechanism. R261, H293, and S345 together coordinate substrate.

Belongs to the RuBisCO large chain family. Type I subfamily. In terms of assembly, heterohexadecamer of 8 large chains and 8 small chains; disulfide-linked. The disulfide link is formed within the large subunit homodimers. The cofactor is Mg(2+). In terms of processing, the disulfide bond which can form in the large chain dimeric partners within the hexadecamer appears to be associated with oxidative stress and protein turnover.

It localises to the plastid. The protein localises to the chloroplast. The catalysed reaction is 2 (2R)-3-phosphoglycerate + 2 H(+) = D-ribulose 1,5-bisphosphate + CO2 + H2O. The enzyme catalyses D-ribulose 1,5-bisphosphate + O2 = 2-phosphoglycolate + (2R)-3-phosphoglycerate + 2 H(+). RuBisCO catalyzes two reactions: the carboxylation of D-ribulose 1,5-bisphosphate, the primary event in carbon dioxide fixation, as well as the oxidative fragmentation of the pentose substrate in the photorespiration process. Both reactions occur simultaneously and in competition at the same active site. The sequence is that of Ribulose bisphosphate carboxylase large chain from Viola sororia (Woolly blue violet).